The chain runs to 280 residues: MSEQEVTYSTVRFHESSRLQKLVRTEEPQRPREACYREYSVPWKLIVIACGILCFLLLVTVALLAITIFQHSQQKHELQETLNCHDNCSPTQSDVNLKDELLRNKSIECRPGNDLLESLSRDQNRWYSETKTFSDSSQHTGVHERPISKAEGKGRGFEKYWFCYGIKCYYFNMDRKTWSGCKQTCQISSLSLLKIDNEDELKFLQNLAPSDISWIGLSYDNKKKDWVWIDNGPSKLALNTTKYNIRDGLCMSLSKTRLDNGDCDKSYICICGKRLDKFPH.

Topologically, residues 1–44 (MSEQEVTYSTVRFHESSRLQKLVRTEEPQRPREACYREYSVPWK) are cytoplasmic. Residues 45–66 (LIVIACGILCFLLLVTVALLAI) form a helical; Signal-anchor for type II membrane protein membrane-spanning segment. The Extracellular segment spans residues 67–280 (TIFQHSQQKH…CGKRLDKFPH (214 aa)). N-linked (GlcNAc...) asparagine glycosylation is present at Asn104. Positions 156–275 (GFEKYWFCYG…SYICICGKRL (120 aa)) constitute a C-type lectin domain. Disulfide bonds link Cys163/Cys168, Cys181/Cys269, Cys185/Cys271, and Cys250/Cys263. Asn239 carries an N-linked (GlcNAc...) asparagine glycan.

Homodimer; disulfide-linked.

Its subcellular location is the membrane. Receptor on natural killer (NK) cells for class I MHC. This Mus musculus (Mouse) protein is Killer cell lectin-like receptor 7 (Klra7).